The sequence spans 280 residues: UPF0494 membrane protein SPAC212.01c (280 aa).

4 consecutive transmembrane segments (helical) span residues 107–127, 144–164, 178–198, and 199–219; these read WPLL…KFEV, IWVP…SLIF, VIIA…GMII, and AALG…LYFG.

Belongs to the UPF0494 family.

The protein resides in the membrane. The protein is UPF0494 membrane protein SPAC212.01c of Schizosaccharomyces pombe (strain 972 / ATCC 24843) (Fission yeast).